The primary structure comprises 101 residues: Protein E7 (101 aa).

The tract at residues 1–43 (MRGNVPQLKDVVLHLTPQTEIDLQCYEQFDSSEEEDEVDNMRD) is E7 terminal domain. The LXCXE motif; interaction with host RB1 and TMEM173/STING motif lies at 23 to 27 (LQCYE). A zinc finger lies at 62–98 (CCRCSSVVQLAVESSGDTLRVVQQMLMGELSLVCPCC). The Nuclear export signal signature appears at 80 to 88 (LRVVQQMLM).

This sequence belongs to the papillomaviridae E7 protein family. As to quaternary structure, homodimer. Homooligomer. Interacts with host RB1; this interaction induces dissociation of RB1-E2F1 complex thereby disrupting RB1 activity. Interacts with host EP300; this interaction represses EP300 transcriptional activity. Interacts with protein E2; this interaction inhibits E7 oncogenic activity. Interacts with host TMEM173/STING; this interaction impairs the ability of TMEM173/STING to sense cytosolic DNA and promote the production of type I interferon (IFN-alpha and IFN-beta). Post-translationally, highly phosphorylated.

Its subcellular location is the host cytoplasm. It is found in the host nucleus. In terms of biological role, plays a role in viral genome replication by driving entry of quiescent cells into the cell cycle. Stimulation of progression from G1 to S phase allows the virus to efficiently use the cellular DNA replicating machinery to achieve viral genome replication. E7 protein has both transforming and trans-activating activities. Induces the disassembly of the E2F1 transcription factor from RB1, with subsequent transcriptional activation of E2F1-regulated S-phase genes. Interferes with host histone deacetylation mediated by HDAC1 and HDAC2, leading to transcription activation. Also plays a role in the inhibition of both antiviral and antiproliferative functions of host interferon alpha. Interaction with host TMEM173/STING impairs the ability of TMEM173/STING to sense cytosolic DNA and promote the production of type I interferon (IFN-alpha and IFN-beta). This is Protein E7 from Homo sapiens (Human).